The following is a 139-amino-acid chain: uncharacterized protein (139 aa).

Positions 8–63 constitute an HTH cro/C1-type domain; sequence LRELRRARKLTVNQLAVYSGISSATISKIENGKRGTPKPATIKKLAAVLKVPYENL. The segment at residues 19–38 is a DNA-binding region (H-T-H motif); it reads VNQLAVYSGISSATISKIEN.

This is an uncharacterized protein from Bacillus subtilis (strain 168).